The following is a 229-amino-acid chain: Translation initiation factor IF-3 (229 aa).

2 disordered regions span residues 1–21 (MAIQ…TNRR) and 184–229 (QAQR…AGPR). A compositionally biased stretch (low complexity) spans 192-203 (AAAQAAPAAAPQ). The span at 204–221 (PGAPAAPPAAPAPAPAPE) shows a compositional bias: pro residues.

Belongs to the IF-3 family. In terms of assembly, monomer.

It is found in the cytoplasm. In terms of biological role, IF-3 binds to the 30S ribosomal subunit and shifts the equilibrium between 70S ribosomes and their 50S and 30S subunits in favor of the free subunits, thus enhancing the availability of 30S subunits on which protein synthesis initiation begins. The polypeptide is Translation initiation factor IF-3 (Anaeromyxobacter sp. (strain Fw109-5)).